The following is a 405-amino-acid chain: Na(+)-translocating NADH-quinone reductase subunit F (405 aa).

Residues 3 to 23 form a helical membrane-spanning segment; it reads IILGIVMFTVIVLALALMILF. The region spanning 32–124 is the 2Fe-2S ferredoxin-type domain; it reads GDITIKVNDE…DMDIEVPEEV (93 aa). [2Fe-2S] cluster contacts are provided by Cys-67, Cys-73, Cys-76, and Cys-108. Residues 127–267 enclose the FAD-binding FR-type domain; sequence VKKWECTVIS…SGPFGEFFAK (141 aa).

Belongs to the NqrF family. As to quaternary structure, composed of six subunits; NqrA, NqrB, NqrC, NqrD, NqrE and NqrF. Requires [2Fe-2S] cluster as cofactor. FAD serves as cofactor.

It is found in the cell inner membrane. The catalysed reaction is a ubiquinone + n Na(+)(in) + NADH + H(+) = a ubiquinol + n Na(+)(out) + NAD(+). Its function is as follows. NQR complex catalyzes the reduction of ubiquinone-1 to ubiquinol by two successive reactions, coupled with the transport of Na(+) ions from the cytoplasm to the periplasm. The first step is catalyzed by NqrF, which accepts electrons from NADH and reduces ubiquinone-1 to ubisemiquinone by a one-electron transfer pathway. The chain is Na(+)-translocating NADH-quinone reductase subunit F from Neisseria gonorrhoeae (strain ATCC 700825 / FA 1090).